Reading from the N-terminus, the 70-residue chain is Phycocyanin-645 alpha-2 chain (70 aa).

Position 16 (Arg-16) interacts with (2R,3E)-phycocyanobilin. The mesobiliverdin site is built by Cys-18, Tyr-26, and Lys-41.

Belongs to the phycoerythrin family. In terms of assembly, heterotetramer of 2 different alpha chains and 2 identical beta chains which form 2 alpha-beta heterodimers within the heterotetramer. Contains one phycocyanobilin chromophore, one mesobiliverdin chromophore and one 15,16-dihydrobiliverdin chromophore with binding mediated by both the alpha and beta subunits.

It is found in the plastid. It localises to the chloroplast thylakoid membrane. Its function is as follows. Light-harvesting photosynthetic tetrapyrrole chromophore-protein from the phycobiliprotein complex. In Chroomonas sp, this protein is Phycocyanin-645 alpha-2 chain.